The primary structure comprises 312 residues: Probable deoxyhypusine synthase (312 aa).

The active-site Nucleophile is Lys-285.

Belongs to the deoxyhypusine synthase family. NAD(+) serves as cofactor.

The enzyme catalyses [eIF5A protein]-L-lysine + spermidine = [eIF5A protein]-deoxyhypusine + propane-1,3-diamine. It participates in protein modification; eIF5A hypusination. In terms of biological role, catalyzes the NAD-dependent oxidative cleavage of spermidine and the subsequent transfer of the butylamine moiety of spermidine to the epsilon-amino group of a specific lysine residue of the eIF-5A precursor protein to form the intermediate deoxyhypusine residue. This is Probable deoxyhypusine synthase from Saccharolobus islandicus (strain M.16.4 / Kamchatka #3) (Sulfolobus islandicus).